The sequence spans 428 residues: Enolase (428 aa).

(2R)-2-phosphoglycerate is bound at residue Gln163. Residue Glu205 is the Proton donor of the active site. 3 residues coordinate Mg(2+): Asp242, Glu285, and Asp312. 4 residues coordinate (2R)-2-phosphoglycerate: Lys337, Arg366, Ser367, and Lys388. The active-site Proton acceptor is Lys337.

This sequence belongs to the enolase family. Mg(2+) is required as a cofactor.

It localises to the cytoplasm. The protein resides in the secreted. The protein localises to the cell surface. It carries out the reaction (2R)-2-phosphoglycerate = phosphoenolpyruvate + H2O. Its pathway is carbohydrate degradation; glycolysis; pyruvate from D-glyceraldehyde 3-phosphate: step 4/5. Catalyzes the reversible conversion of 2-phosphoglycerate (2-PG) into phosphoenolpyruvate (PEP). It is essential for the degradation of carbohydrates via glycolysis. This Nitrosomonas eutropha (strain DSM 101675 / C91 / Nm57) protein is Enolase.